The following is a 156-amino-acid chain: Ribosomal RNA large subunit methyltransferase H (156 aa).

Residues Leu73, Gly104, and 123-128 each bind S-adenosyl-L-methionine; that span reads LSALTL.

It belongs to the RNA methyltransferase RlmH family. In terms of assembly, homodimer.

It is found in the cytoplasm. It carries out the reaction pseudouridine(1915) in 23S rRNA + S-adenosyl-L-methionine = N(3)-methylpseudouridine(1915) in 23S rRNA + S-adenosyl-L-homocysteine + H(+). Its function is as follows. Specifically methylates the pseudouridine at position 1915 (m3Psi1915) in 23S rRNA. In Shewanella woodyi (strain ATCC 51908 / MS32), this protein is Ribosomal RNA large subunit methyltransferase H.